A 912-amino-acid polypeptide reads, in one-letter code: MSSALSPEGDRRYSDDSLSSVSTTSLVFERIQEKTEMDADNDKEKDPRALDDEDPLRDEDDLETGPFLGPGASLHREPMDRGLRRILIIVAVVFIGGWLAGLGIFIASGSYHHESDTEHDPDANSRGSGKSLSMDQLFDGTWSPKYHSISWIAGPKGEDGLLLEVGASNKPYIVVEDIRSDKNVATRDDAEPKASNSRTLMEHPYFEYDGKQYSPSWSEPSPDLTKVLLGVDRKKNWRHSFSAIYFVLDVKTQEAEPLVPDQVDARIQLASWSPKSDAVSFTRENNLYIRRLTGDKDVTQITKDGGPEYFYGIPDWVYEEEVFSGRSATWWSDDGKYLAFLRTNETGVPEYPVQFFIERPSGTTPEDGEEAYPEVEQIKYPKAGAHNPVVDLQFYDIGKKDTFSVEIDGAFADDDRIINNLLWAGDKAIVKQTNRVSDVLKVVLVDVPSRKGKTINTININEIDGGWFEISHKMTYIPADPKNGREHDGYVDSVIHEGYDHLAYFTPLDNSEPIMLTKGNWEVDDAPSAVDLANNLVYFIAAKESSIQRHVYSVKLDGSDLQALTDPKTEAYYDASFSKGAGFVFLSYRGPKVPTQKVISTPVSASSYERIIEDNAELADRARRHELPILKYGTLDLDTGVKVNYVERRPPHFDAKKQYPVLFHQYSGPGSQSVTKRFAVDFQAYVAAALGYLVITVDPRGTGFLGRKHRVTVRSKLGVHEAHDHIAAAASFASRPYVDAERLAIWGWSYGGFTTLKTLEQDAGRTFSYGMAVAPVTDWRFYDSIYTERYMRTPQDNPDGYDLSKVANATALGENKRFLLMHGVADDNVHFQNSLTLLDDLDLAGVENYDVHVFPDSDHSIYFHNGNRIVYDKLRNWLINAFNGEWLKVSNPQPQKDPVEKEKRHMVPQALV.

Positions 1 to 74 (MSSALSPEGD…GPFLGPGASL (74 aa)) are disordered. At 1–85 (MSSALSPEGD…REPMDRGLRR (85 aa)) the chain is on the cytoplasmic side. A compositionally biased stretch (low complexity) spans 16–27 (DSLSSVSTTSLV). The span at 30–50 (RIQEKTEMDADNDKEKDPRAL) shows a compositional bias: basic and acidic residues. Residues 51-63 (DDEDPLRDEDDLE) show a composition bias toward acidic residues. Residues 86 to 106 (ILIIVAVVFIGGWLAGLGIFI) traverse the membrane as a helical; Signal-anchor for type II membrane protein segment. Topologically, residues 107–912 (ASGSYHHESD…KRHMVPQALV (806 aa)) are vacuolar. Asparagine 344 carries an N-linked (GlcNAc...) asparagine glycan. Serine 749 (charge relay system) is an active-site residue. A glycan (N-linked (GlcNAc...) asparagine) is linked at asparagine 808. Catalysis depends on charge relay system residues aspartate 826 and histidine 859. Residues 892 to 912 (PQPQKDPVEKEKRHMVPQALV) are disordered.

It belongs to the peptidase S9B family.

It localises to the vacuole membrane. It catalyses the reaction Release of an N-terminal dipeptide, Xaa-Yaa-|-Zaa-, from a polypeptide, preferentially when Yaa is Pro, provided Zaa is neither Pro nor hydroxyproline.. Functionally, type IV dipeptidyl-peptidase which removes N-terminal dipeptides sequentially from polypeptides having unsubstituted N-termini provided that the penultimate residue is proline. The chain is Probable dipeptidyl-aminopeptidase B (DAPB) from Fusarium vanettenii (strain ATCC MYA-4622 / CBS 123669 / FGSC 9596 / NRRL 45880 / 77-13-4) (Fusarium solani subsp. pisi).